A 518-amino-acid chain; its full sequence is MSCVKLWPSGAPAPLVSIEELENQELVGKGGFGTVFRAQHRKWGYDVAVKIVNSKAISREVKAMASLDNEFVLRLEGVIEKVNWDQDPKPALVTKFMENGSLSGLLQSQCPRPWPLLCRLLKEVVLGMFYLHDQNPVLLHRDLKPSNVLLDPELHVKLADFGLSTFQGGSQSGTGSGEPGGTLGYLAPELFVNVNRKASTASDVYSFGILMWAVLAGREVELPTEPSLVYEAVCNRQNRPSLAELPQAGPETPGLEGLKELMQLCWSSEPKDRPSFQECLPKTDEVFQMVENNMNAAVSTVKDFLSQLRSSNRRFSIPESGQGGTEMDGFRRTIENQHSRNDVMVSEWLNKLNLEEPPSSVPKKCPSLTKRSRAQEEQVPQAWTAGTSSDSMAQPPQTPETSTFRNQMPSPTSTGTPSPGPRGNQGAERQGMNWSCRTPEPNPVTGRPLVNIYNCSGVQVGDNNYLTMQQTTALPTWGLAPSGKGRGLQHPPPVGSQEGPKDPEAWSRPQGWYNHSGK.

Phosphoserine is present on S2. Positions L21 to F287 constitute a Protein kinase domain. V27–V35 is a binding site for ATP. K42 is covalently cross-linked (Glycyl lysine isopeptide (Lys-Gly) (interchain with G-Cter in ubiquitin)). K50 lines the ATP pocket. D142 (proton acceptor) is an active-site residue. Position 164 is a phosphoserine (S164). At T182 the chain carries Phosphothreonine. Phosphoserine; by autocatalysis occurs at positions 199 and 227. T252 is modified (phosphothreonine). S299 bears the Phosphoserine mark. Residue T333 is modified to Phosphothreonine. Residues K351 and K363 each participate in a glycyl lysine isopeptide (Lys-Gly) (interchain with G-Cter in ubiquitin) cross-link. The disordered stretch occupies residues E355–P443. Residues T384–M408 show a composition bias toward polar residues. Phosphoserine is present on S389. T401 is modified (phosphothreonine). Residues V450–L466 carry the RIP homotypic interaction motif (RHIM) motif. Positions T476–K518 are disordered. K518 is covalently cross-linked (Glycyl lysine isopeptide (Lys-Gly) (interchain with G-Cter in ubiquitin)).

This sequence belongs to the protein kinase superfamily. TKL Ser/Thr protein kinase family. As to quaternary structure, interacts (via RIP homotypic interaction motif) with RIPK1 (via RIP homotypic interaction motif); this interaction induces RIPK1 phosphorylation and formation of a RIPK1-RIPK3 necrosis-inducing complex. Interacts with MLKL; the interaction is direct and triggers necroptosis. Interacts with ZBP1 (via RIP homotypic interaction motif); interaction with ZBP1 activates RIPK3, triggering necroptosis. Upon TNF-induced necrosis, the RIPK1-RIPK3 dimer further interacts with PGAM5 and MLKL; the formation of this complex leads to PGAM5 phosphorylation and increase in PGAM5 phosphatase activity. Binds TRAF2 and is recruited to the TNFR-1 signaling complex. Interacts with PYGL, GLUL and GLUD1; these interactions result in activation of these metabolic enzymes. Interacts with BIRC2/c-IAP1, BIRC3/c-IAP2 and XIAP/BIRC4. Interacts with ARHGEF2. Interacts with PELI1 (via atypical FHA domain); the phosphorylated form at Thr-182 binds preferentially to PELI1. Interacts with BUB1B, TRAF2 and STUB1. Interacts with CASP6. Component of the AIM2 PANoptosome complex, a multiprotein complex that drives inflammatory cell death (PANoptosis). (Microbial infection) Interacts (via RIP homotypic interaction motif/RHIM) with herpes simplex virus 1/HHV-1 protein RIR1/ICP6 (via RHIM); this interaction may induce heteromeric amyloid assemblies and prevent necroptosis activation. In terms of assembly, (Microbial infection) Interacts (via RIP homotypic interaction motif/RHIM) with herpes simplex virus 2/HHV-2 protein RIR1/ICP10 (via RHIM); this interaction prevents necroptosis activation. (Microbial infection) Proteolytically cleaved by S.flexneri OspD3 within the RIP homotypic interaction motif (RHIM), leading to its degradation and inhibition of necroptosis. Post-translationally, RIPK1 and RIPK3 undergo reciprocal auto- and trans-phosphorylation. Autophosphorylated following interaction with ZBP1. Phosphorylation of Ser-199 plays a role in the necroptotic function of RIPK3. Autophosphorylates at Ser-227 following activation by ZBP1: phosphorylation at these sites is a hallmark of necroptosis and is required for binding MLKL. Phosphorylation at Thr-182 is important for its kinase activity, interaction with PELI1 and PELI1-mediated 'Lys-48'-linked polyubiquitination and for its ability to mediate TNF-induced necroptosis. In terms of processing, polyubiquitinated with 'Lys-48' and 'Lys-63'-linked chains by BIRC2/c-IAP1 and BIRC3/c-IAP2, leading to activation of NF-kappa-B. Polyubiquitinated with 'Lys-48'-linked chains by PELI1 leading to its subsequent proteasome-dependent degradation. Ubiquitinated by STUB1 leading to its subsequent proteasome-dependent degradation. Deubiquitinated by USP22. As to expression, highly expressed in the pancreas. Detected at lower levels in heart, placenta, lung and kidney. In terms of tissue distribution, expression is significantly increased in colon and lung cancers.

Its subcellular location is the cytoplasm. It localises to the cytosol. The protein localises to the nucleus. The enzyme catalyses L-seryl-[protein] + ATP = O-phospho-L-seryl-[protein] + ADP + H(+). The catalysed reaction is L-threonyl-[protein] + ATP = O-phospho-L-threonyl-[protein] + ADP + H(+). Its activity is regulated as follows. Activity is stimulated by ZBP1, which senses double-stranded Z-RNA structures. RIPK3-dependent necroptosis is inhibited by RIPK1: RIPK1 prevents the ZBP1-induced activation of RIPK3 via FADD-mediated recruitment of CASP8, which cleaves RIPK1 and limits TNF-induced necroptosis. Its function is as follows. Serine/threonine-protein kinase that activates necroptosis and apoptosis, two parallel forms of cell death. Necroptosis, a programmed cell death process in response to death-inducing TNF-alpha family members, is triggered by RIPK3 following activation by ZBP1. Activated RIPK3 forms a necrosis-inducing complex and mediates phosphorylation of MLKL, promoting MLKL localization to the plasma membrane and execution of programmed necrosis characterized by calcium influx and plasma membrane damage. In addition to TNF-induced necroptosis, necroptosis can also take place in the nucleus in response to orthomyxoviruses infection: following ZBP1 activation, which senses double-stranded Z-RNA structures, nuclear RIPK3 catalyzes phosphorylation and activation of MLKL, promoting disruption of the nuclear envelope and leakage of cellular DNA into the cytosol. Also regulates apoptosis: apoptosis depends on RIPK1, FADD and CASP8, and is independent of MLKL and RIPK3 kinase activity. Phosphorylates RIPK1: RIPK1 and RIPK3 undergo reciprocal auto- and trans-phosphorylation. In some cell types, also able to restrict viral replication by promoting cell death-independent responses. In response to Zika virus infection in neurons, promotes a cell death-independent pathway that restricts viral replication: together with ZBP1, promotes a death-independent transcriptional program that modifies the cellular metabolism via up-regulation expression of the enzyme ACOD1/IRG1 and production of the metabolite itaconate. Itaconate inhibits the activity of succinate dehydrogenase, generating a metabolic state in neurons that suppresses replication of viral genomes. RIPK3 binds to and enhances the activity of three metabolic enzymes: GLUL, GLUD1, and PYGL. These metabolic enzymes may eventually stimulate the tricarboxylic acid cycle and oxidative phosphorylation, which could result in enhanced ROS production. In terms of biological role, (Microbial infection) In case of herpes simplex virus 1/HHV-1 infection, forms heteromeric amyloid structures with HHV-1 protein RIR1/ICP6 which may inhibit RIPK3-mediated necroptosis, thereby preventing host cell death pathway and allowing viral evasion. The chain is Receptor-interacting serine/threonine-protein kinase 3 from Homo sapiens (Human).